Reading from the N-terminus, the 288-residue chain is Bifunctional protein FolD (288 aa).

NADP(+) contacts are provided by residues 166–168 and Ile232; that span reads GAS.

Belongs to the tetrahydrofolate dehydrogenase/cyclohydrolase family. Homodimer.

The enzyme catalyses (6R)-5,10-methylene-5,6,7,8-tetrahydrofolate + NADP(+) = (6R)-5,10-methenyltetrahydrofolate + NADPH. It carries out the reaction (6R)-5,10-methenyltetrahydrofolate + H2O = (6R)-10-formyltetrahydrofolate + H(+). The protein operates within one-carbon metabolism; tetrahydrofolate interconversion. In terms of biological role, catalyzes the oxidation of 5,10-methylenetetrahydrofolate to 5,10-methenyltetrahydrofolate and then the hydrolysis of 5,10-methenyltetrahydrofolate to 10-formyltetrahydrofolate. The sequence is that of Bifunctional protein FolD from Escherichia coli (strain SMS-3-5 / SECEC).